A 121-amino-acid polypeptide reads, in one-letter code: UPF0212 protein VNG_0879C (121 aa).

Belongs to the UPF0212 family.

In Halobacterium salinarum (strain ATCC 700922 / JCM 11081 / NRC-1) (Halobacterium halobium), this protein is UPF0212 protein VNG_0879C.